The following is a 970-amino-acid chain: Disease resistance protein RGA2 (970 aa).

In terms of domain architecture, NB-ARC spans 135-438 (RQAVRRETGS…MAHGFLLSKG (304 aa)). ATP is bound at residue 182-189 (GMGGLGKT). 14 LRR repeats span residues 525 to 548 (FISLRVLNLGDSTFNKLPSSIGDL), 550 to 571 (HLRYLNLYGSGMRSLPKQLCKL), 573 to 594 (NLQTLDLQYCTKLCCLPKETSK), 595 to 619 (LGSLRNLLLDGSQSLTCMPPRIGSL), 638 to 662 (LGELGNLNLYGSIKISHLERVKNDK), 672 to 697 (KGNLHSLSMSWNNFGPHIYESEEVKV), 752 to 777 (LPCLESLELHWGSADVEYVEEVDIDV), 787 to 811 (FPSLRKLDIWDFGSLKGLLKKEGEE), 813 to 832 (FPVLEEMIIHECPFLTLSSN), 833 to 857 (LRALTSLRICYNKVATSFPEEMFKN), 859 to 882 (ANLKYLTISRCNNLKELPTSLASL), 884 to 906 (ALKSLKIQLCCALESLPEEGLEG), 907 to 931 (LSSLTELFVEHCNMLKCLPEGLQHL), and 946 to 970 (IKRCEKGIGEDWHKISHIPNVNIYI).

The protein belongs to the disease resistance NB-LRR family.

Disease resistance protein. Resistance proteins guard the plant against pathogens that contain an appropriate avirulence protein via a direct or indirect interaction with this avirulence protein. That triggers a defense system which restricts the pathogen growth. Confers a broad resistance to all known races of P.infestans. In Solanum bulbocastanum (Wild potato), this protein is Disease resistance protein RGA2 (RGA2).